A 282-amino-acid polypeptide reads, in one-letter code: Phosphate import ATP-binding protein PstB (282 aa).

Residues 36-277 form the ABC transporter domain; it reads IEVKNLNFFY…PARKETEDYI (242 aa). 68–75 is an ATP binding site; sequence GPSGCGKS.

It belongs to the ABC transporter superfamily. Phosphate importer (TC 3.A.1.7) family. As to quaternary structure, the complex is composed of two ATP-binding proteins (PstB), two transmembrane proteins (PstC and PstA) and a solute-binding protein (PstS).

It localises to the cell inner membrane. It carries out the reaction phosphate(out) + ATP + H2O = ADP + 2 phosphate(in) + H(+). Functionally, part of the ABC transporter complex PstSACB involved in phosphate import. Responsible for energy coupling to the transport system. This is Phosphate import ATP-binding protein PstB from Burkholderia pseudomallei (strain 1710b).